We begin with the raw amino-acid sequence, 324 residues long: Beta-ketoacyl-[acyl-carrier-protein] synthase III (324 aa).

Residues Cys-113 and His-251 contribute to the active site. The segment at 252 to 256 (QANKR) is ACP-binding. Asn-281 is an active-site residue.

The protein belongs to the thiolase-like superfamily. FabH family. In terms of assembly, homodimer.

Its subcellular location is the cytoplasm. It carries out the reaction malonyl-[ACP] + acetyl-CoA + H(+) = 3-oxobutanoyl-[ACP] + CO2 + CoA. Its pathway is lipid metabolism; fatty acid biosynthesis. Its function is as follows. Catalyzes the condensation reaction of fatty acid synthesis by the addition to an acyl acceptor of two carbons from malonyl-ACP. Catalyzes the first condensation reaction which initiates fatty acid synthesis and may therefore play a role in governing the total rate of fatty acid production. Possesses both acetoacetyl-ACP synthase and acetyl transacylase activities. Its substrate specificity determines the biosynthesis of branched-chain and/or straight-chain of fatty acids. The chain is Beta-ketoacyl-[acyl-carrier-protein] synthase III from Bartonella tribocorum (strain CIP 105476 / IBS 506).